The sequence spans 191 residues: Probable DNA-directed RNA polymerase subunit delta (191 aa).

An HTH HARE-type domain is found at 14-83; sequence LSMIEVARAI…GENKWGLRSW (70 aa). 2 stretches are compositionally biased toward acidic residues: residues 117–136 and 142–191; these read GDED…DFTE and EYDE…EEEV. Positions 117-191 are disordered; sequence GDEDAIDYND…DEEEEEEEEV (75 aa).

It belongs to the RpoE family. RNAP is composed of a core of 2 alpha, a beta and a beta' subunits. The core is associated with a delta subunit and one of several sigma factors.

Participates in both the initiation and recycling phases of transcription. In the presence of the delta subunit, RNAP displays an increased specificity of transcription, a decreased affinity for nucleic acids, and an increased efficiency of RNA synthesis because of enhanced recycling. This is Probable DNA-directed RNA polymerase subunit delta from Streptococcus agalactiae serotype Ia (strain ATCC 27591 / A909 / CDC SS700).